Here is a 70-residue protein sequence, read N- to C-terminus: Small ribosomal subunit protein bS21 (70 aa).

It belongs to the bacterial ribosomal protein bS21 family.

The sequence is that of Small ribosomal subunit protein bS21 from Sulfurovum sp. (strain NBC37-1).